The following is a 533-amino-acid chain: (E)-beta-farnesene synthase (533 aa).

Mg(2+) contacts are provided by Asp286, Asp290, Asn430, Ser434, and Glu438. The DDXXD motif motif lies at 286-290 (DDMMD).

The protein belongs to the terpene synthase family. It depends on Mg(2+) as a cofactor. Requires Co(2+) as cofactor. Mn(2+) is required as a cofactor.

It is found in the cytoplasm. It catalyses the reaction (2E,6E)-farnesyl diphosphate = (E)-beta-farnesene + diphosphate. Its pathway is secondary metabolite biosynthesis; terpenoid biosynthesis. In terms of biological role, sesquiterpene cyclase catalyzing the production of sixfold more beta-farnesene than alpha-bergamotene from farnesyl diphosphate. Involved in indirect defense by producing volatile signals attracting natural enemies of herbivores. The polypeptide is (E)-beta-farnesene synthase (Zea diploperennis (Diploperennial teosinte)).